The following is a 126-amino-acid chain: Profilin (126 aa).

Belongs to the profilin family. Occurs in many kinds of cells as a complex with monomeric actin in a 1:1 ratio.

The protein resides in the cytoplasm. It localises to the cytoskeleton. Functionally, binds to actin and affects the structure of the cytoskeleton. At high concentrations, profilin prevents the polymerization of actin, whereas it enhances it at low concentrations. By binding to PIP2, it inhibits the formation of IP3 and DG. The polypeptide is Profilin (Branchiostoma belcheri (Amphioxus)).